The chain runs to 589 residues: Complement component C8 beta chain (589 aa).

Positions 1 to 31 (MKIGAQVWRALAKSCLLCATLGCLHFPGSRG) are cleaved as a signal peptide. The propeptide occupies 32–53 (GKPDFFETKAVNGSLVKSRPVR). N43 carries an N-linked (GlcNAc...) asparagine glycan. A TSP type-1 1 domain is found at 63 to 116 (DCELSTWSSWTACDPCQKKRYRHTYLLRPSQFYGELCDLSDKEVEDCVTNQPCR). 7 disulfide bridges follow: C64–C99, C75–C109, C78–C115, C121–C132, C126–C145, C139–C154, and C161–C199. Residues W69 and W72 are each glycosylated (C-linked (Man) tryptophan). The region spanning 120-155 (RCEGFVCAQTGRCVNRRLLCNGDNDCGDQSDEANCR) is the LDL-receptor class A domain. Residues L137, N140, D142, D144, D150, and E151 each contribute to the Ca(2+) site. One can recognise an MACPF domain in the interval 157 to 503 (IYKNCQREME…EFQSEVSSCR (347 aa)). 8 beta stranded membrane passes run 201 to 206 (PHYILD), 209 to 213 (FRKPY), 251 to 258 (FNFTSGFK), 261 to 268 (GVMDLGIK), 328 to 335 (SYGEYRDL), 338 to 343 (DFGTHF), 378 to 385 (AGGSFGIG), and 391 to 398 (VYVKVGVS). A disulfide bridge links C377 with C402. One can recognise an EGF-like domain in the interval 404-534 (DIMKEINERN…PGGFQGTACE (131 aa)). T417 bears the Phosphothreonine mark. 4 cysteine pairs are disulfide-bonded: C502/C549, C504/C520, C507/C522, and C524/C533. Residues 544 to 587 (DGKWSCWSDWSACSGGHKTRHRQCNNPAPHKGGSPCSGPASETL) form the TSP type-1 2 domain. Residues W550 and W553 are each glycosylated (C-linked (Man) tryptophan). Cysteines 556 and 589 form a disulfide. The interval 570-589 (PAPHKGGSPCSGPASETLNC) is disordered.

This sequence belongs to the complement C6/C7/C8/C9 family. In terms of assembly, heterotrimer of 3 chains: alpha (C8A), beta (C8B) and gamma (C8G); the alpha and gamma chains are disulfide bonded. Component of the membrane attack complex (MAC), composed of complement C5b, C6, C7, C8A, C8B, C8G and multiple copies of the pore-forming subunit C9. Post-translationally, N-glycosylated; contains one or two bound glycans. Not O-glycosylated.

The protein localises to the secreted. The protein resides in the target cell membrane. Its activity is regulated as follows. Membrane attack complex (MAC) assembly is inhibited by CD59, thereby protecting self-cells from damage during complement activation. CD59 acts by binding to the beta-haipins of C8 (C8A and C8B), forming an intermolecular beta-sheet that prevents incorporation of the multiple copies of C9 required for complete formation of the osmolytic pore. MAC assembly is also inhibited by clusterin (CLU) chaperones that inhibit polymerization of C9. In terms of biological role, component of the membrane attack complex (MAC), a multiprotein complex activated by the complement cascade, which inserts into a target cell membrane and forms a pore, leading to target cell membrane rupture and cell lysis. The MAC is initiated by proteolytic cleavage of C5 into complement C5b in response to the classical, alternative, lectin and GZMK complement pathways. The complement pathways consist in a cascade of proteins that leads to phagocytosis and breakdown of pathogens and signaling that strengthens the adaptive immune system. C8B, together with C8A and C8G, inserts into the target membrane, but does not form pores by itself. During MAC assembly, associates with C5b, C6 and C7 to form the C5b8 intermediate complex that inserts into the target membrane and traverses the bilayer increasing membrane rigidity. In Mus musculus (Mouse), this protein is Complement component C8 beta chain (C8b).